Here is a 106-residue protein sequence, read N- to C-terminus: MIPGEYHVKPGQIALNTGRATCRVVVENHGDRPIQVGSHYHFAEVNPALKFDRQQVTGYRLNIPAGTAVRFEPGQKREVELVAFAGHRAVFGFRGEVMGPLEANDE.

Belongs to the urease beta subunit family. In terms of assembly, heterotrimer of UreA (gamma), UreB (beta) and UreC (alpha) subunits. Three heterotrimers associate to form the active enzyme.

The protein localises to the cytoplasm. The catalysed reaction is urea + 2 H2O + H(+) = hydrogencarbonate + 2 NH4(+). Its pathway is nitrogen metabolism; urea degradation; CO(2) and NH(3) from urea (urease route): step 1/1. This Klebsiella pneumoniae (strain 342) protein is Urease subunit beta.